The following is a 267-amino-acid chain: CD82 antigen (267 aa).

Over 1–11 (MGSACIKVTKY) the chain is Cytoplasmic. Cys-5 carries the S-palmitoyl cysteine lipid modification. A helical membrane pass occupies residues 12–32 (FLFLFNLIFFILGAVILGFGV). The Extracellular portion of the chain corresponds to 33–53 (WILADKSSFISVLQTSSSSLR). Residues 54–72 (MGAYVFIGVGAVTMLMGFL) traverse the membrane as a helical segment. Over 73-83 (GCIGAVNEVRC) the chain is Cytoplasmic. Cys-74 carries S-palmitoyl cysteine lipidation. The helical transmembrane segment at 84-110 (LLGLYFAFLLLILIAQVTAGALFYFNM) threads the bilayer. The Extracellular portion of the chain corresponds to 111-228 (GKLKQEMGGI…KVQAWLQENL (118 aa)). 3 N-linked (GlcNAc...) asparagine glycosylation sites follow: Asn-129, Asn-157, and Asn-198. A helical transmembrane segment spans residues 229–250 (GIILGVGVGVAIIELLGMVLSI). At 251 to 267 (CLCRHVHSEDYSKVPKY) the chain is on the cytoplasmic side.

It belongs to the tetraspanin (TM4SF) family. In terms of assembly, forms homooligomers. Interacts directly with IGSF8. Interacts with EGFR. Interacts with VEGFA and PDGFB. Interacts with ITGA4. Interacts with ITGA6; this interaction reduces ITGA6 cell surface expression. Interacts with ITGB1. Interacts with TLR4; this interaction inhibits TLR4-mediated signaling pathway. Interacts with TLR9. Interacts with PLAUR. Post-translationally, palmitoylated. Palmitoylation contributes to oligomerization and surface expression. Lymphoid specific.

It localises to the cell membrane. Its subcellular location is the cytoplasmic vesicle. The protein resides in the phagosome. In terms of biological role, structural component of specialized membrane microdomains known as tetraspanin-enriched microdomains (TERMs), which act as platforms for receptor clustering and signaling. Participates thereby in diverse biological functions such as cell signal transduction, adhesion, migration and protein trafficking. Acts as a attenuator of EGF signaling, facilitating ligand-induced endocytosis of the receptor and its subsequent desensitization. Mechanistically, modulates ligand-induced ubiquitination and trafficking of EGFR via E3 ligase CBL phosphorylation by PKC. Increases cell-matrix adhesion by regulating the membrane organization of integrin alpha4/ITA4. Modulates adhesion and suppresses cell migration through other integrins such as the alpha6/ITGA6 and beta1/ITGB1. Decreases cell-associated plasminogen activation by interfering with the interaction between urokinase-type plasminogen activator/PLAU and its receptor PLAUR. Associates with CD4 or CD8 and delivers costimulatory signals for the TCR/CD3 pathway. Plays a role in TLR9 trafficking to acidified CpG-containing compartments by controlling interaction between TLR9 and VAMP3 and subsequent myddosome assembly. Inhibits LPS-induced inflammatory response by preventing binding of LPS to TLR4 on the cell surface. Plays a role in the activation of macrophages into anti-inflammatory phenotypes. Independently of Toll-like receptor (TLR) signaling, is recruited to pathogen-containing phagosomes prior to fusion with lysosomes and thereby participates in antigen presentation. Also acts to control angiogenesis and switch angiogenic milieu to quiescent state by binding and sequestering VEGFA and PDGFB to inhibit the signaling they trigger via their respective cell surface receptor. The sequence is that of CD82 antigen (CD82) from Homo sapiens (Human).